Reading from the N-terminus, the 564-residue chain is Urocanate hydratase (564 aa).

Residues 58-59, Q136, 182-184, E202, R207, 248-249, 269-273, 279-280, and Y328 contribute to the NAD(+) site; these read GG, GMG, NA, QTSAH, and YL. Residue C416 is part of the active site. NAD(+) is bound at residue G498.

It belongs to the urocanase family. The cofactor is NAD(+).

It localises to the cytoplasm. The catalysed reaction is 4-imidazolone-5-propanoate = trans-urocanate + H2O. It functions in the pathway amino-acid degradation; L-histidine degradation into L-glutamate; N-formimidoyl-L-glutamate from L-histidine: step 2/3. In terms of biological role, catalyzes the conversion of urocanate to 4-imidazolone-5-propionate. This is Urocanate hydratase from Aliivibrio salmonicida (strain LFI1238) (Vibrio salmonicida (strain LFI1238)).